A 206-amino-acid chain; its full sequence is Small ribosomal subunit protein uS4 (206 aa).

Positions 96-156 (GRLDNVVYRM…EKAKKQARIK (61 aa)) constitute an S4 RNA-binding domain.

The protein belongs to the universal ribosomal protein uS4 family. Part of the 30S ribosomal subunit. Contacts protein S5. The interaction surface between S4 and S5 is involved in control of translational fidelity.

One of the primary rRNA binding proteins, it binds directly to 16S rRNA where it nucleates assembly of the body of the 30S subunit. In terms of biological role, with S5 and S12 plays an important role in translational accuracy. The protein is Small ribosomal subunit protein uS4 of Tolumonas auensis (strain DSM 9187 / NBRC 110442 / TA 4).